The sequence spans 160 residues: Transcriptional repressor NrdR (160 aa).

The segment covering 1–11 (MRCPSCNSLDT) has biased composition (polar residues). Positions 1–20 (MRCPSCNSLDTQVKDSRPTE) are disordered. Residues 3 to 34 (CPSCNSLDTQVKDSRPTEDSAVIRRRRVCMAC) fold into a zinc finger. The region spanning 49 to 139 (LTVIKRNGRR…VYRNFREAKD (91 aa)) is the ATP-cone domain.

It belongs to the NrdR family. Zn(2+) is required as a cofactor.

Its function is as follows. Negatively regulates transcription of bacterial ribonucleotide reductase nrd genes and operons by binding to NrdR-boxes. In Nitrobacter winogradskyi (strain ATCC 25391 / DSM 10237 / CIP 104748 / NCIMB 11846 / Nb-255), this protein is Transcriptional repressor NrdR.